Consider the following 362-residue polypeptide: Adenosine kinase (362 aa).

A2 is subject to N-acetylalanine. A Nuclear localization signal motif is present at residues 8-16 (PKPKKLKVE). Residue D35 coordinates adenosine. S49 contributes to the Mg(2+) binding site. Y77 bears the Phosphotyrosine mark. The Mg(2+) site is built by D147 and N148. Q306 is an adenosine binding site. D317 (proton acceptor) is an active-site residue.

Belongs to the carbohydrate kinase PfkB family. As to quaternary structure, monomer. The cofactor is Mg(2+). As to expression, widely expressed. Highest level in placenta, liver, muscle and kidney.

Its subcellular location is the nucleus. It is found in the cytoplasm. It catalyses the reaction adenosine + ATP = AMP + ADP + H(+). It functions in the pathway purine metabolism; AMP biosynthesis via salvage pathway; AMP from adenosine: step 1/1. Activity is inhibited by 5-iodotubercidin and 5'-amino-5'-deoxyadenosine. Catalyzes the phosphorylation of the purine nucleoside adenosine at the 5' position in an ATP-dependent manner. Serves as a potential regulator of concentrations of extracellular adenosine and intracellular adenine nucleotides. The sequence is that of Adenosine kinase from Homo sapiens (Human).